The following is a 208-amino-acid chain: Large ribosomal subunit protein uL4 (208 aa).

The tract at residues 45 to 83 is disordered; sequence RQGTHKSKTRAEVRGGGRKPYRQKGTGNARQGSTRSPLM. The span at 69-80 shows a compositional bias: polar residues; that stretch reads GTGNARQGSTRS.

It belongs to the universal ribosomal protein uL4 family. In terms of assembly, part of the 50S ribosomal subunit.

Its function is as follows. One of the primary rRNA binding proteins, this protein initially binds near the 5'-end of the 23S rRNA. It is important during the early stages of 50S assembly. It makes multiple contacts with different domains of the 23S rRNA in the assembled 50S subunit and ribosome. Forms part of the polypeptide exit tunnel. In Chlorobium luteolum (strain DSM 273 / BCRC 81028 / 2530) (Pelodictyon luteolum), this protein is Large ribosomal subunit protein uL4.